We begin with the raw amino-acid sequence, 566 residues long: uncharacterized protein (566 aa).

This is an uncharacterized protein from Escherichia coli (strain K12).